The following is a 257-amino-acid chain: NAD kinase (257 aa).

Asp-46 acts as the Proton acceptor in catalysis. Residues 46 to 47, 116 to 117, Asp-146, Ala-154, and 157 to 162 each bind NAD(+); these read DG, NE, and TAYNLS.

This sequence belongs to the NAD kinase family. It depends on a divalent metal cation as a cofactor.

Its subcellular location is the cytoplasm. It carries out the reaction NAD(+) + ATP = ADP + NADP(+) + H(+). Involved in the regulation of the intracellular balance of NAD and NADP, and is a key enzyme in the biosynthesis of NADP. Catalyzes specifically the phosphorylation on 2'-hydroxyl of the adenosine moiety of NAD to yield NADP. The sequence is that of NAD kinase from Mesorhizobium japonicum (strain LMG 29417 / CECT 9101 / MAFF 303099) (Mesorhizobium loti (strain MAFF 303099)).